The sequence spans 214 residues: Rac-like GTP-binding protein 1 (214 aa).

Residues 17–24 (GDGAVGKT), 20–25 (AVGKTC), T42, 64–68 (DTAGQ), G67, 122–125 (TKLD), 123–125 (KLD), and 164–165 (SK) contribute to the GTP site. The Effector region motif lies at 39 to 47 (YIPTVFDNF).

This sequence belongs to the small GTPase superfamily. Rho family. May interact with MPK1/MAPK6. Binds to RBOHB, preferentially in the GTP-bound form. Interacts with CCR1 in a GTP-dependent manner. Post-translationally, may be palmitoylated.

It is found in the cytoplasm. The protein localises to the membrane. Functionally, small GTPase playing a general role in disease resistance signaling pathway. Acts downstream of heterotrimeric G protein alpha subunit. Regulates cell death and reactive oxygen species production, probably through NADPH oxidase. Also involved in sphingolipid elicitor (SE)-dependent defense signaling. Activates phytoalexin production and alters defense-related genes. Down-regulates metallothionein 2b, a reactive oxygen scavenger. May control lignin synthesis through regulation of both NADPH oxidase and CCR1 activities during defense responses. Stimulates lignin synthesis in suspension cell culture. This chain is Rac-like GTP-binding protein 1 (RAC1), found in Oryza sativa subsp. japonica (Rice).